We begin with the raw amino-acid sequence, 213 residues long: A-type ATP synthase subunit D (213 aa).

It belongs to the V-ATPase D subunit family. Has multiple subunits with at least A(3), B(3), C, D, E, F, H, I and proteolipid K(x).

Its subcellular location is the cell membrane. Component of the A-type ATP synthase that produces ATP from ADP in the presence of a proton gradient across the membrane. In Thermoplasma acidophilum (strain ATCC 25905 / DSM 1728 / JCM 9062 / NBRC 15155 / AMRC-C165), this protein is A-type ATP synthase subunit D.